The sequence spans 149 residues: Large ribosomal subunit protein uL22c (149 aa).

This sequence belongs to the universal ribosomal protein uL22 family. In terms of assembly, part of the 50S ribosomal subunit.

It is found in the plastid. The protein resides in the chloroplast. Functionally, this protein binds specifically to 23S rRNA. In terms of biological role, the globular domain of the protein is located near the polypeptide exit tunnel on the outside of the subunit, while an extended beta-hairpin is found that lines the wall of the exit tunnel in the center of the 70S ribosome. The sequence is that of Large ribosomal subunit protein uL22c (rpl22) from Oryza nivara (Indian wild rice).